The sequence spans 717 residues: Polyribonucleotide nucleotidyltransferase (717 aa).

Mg(2+)-binding residues include Asp-486 and Asp-492. Residues Pro-553 to Ile-612 form the KH domain. An S1 motif domain is found at Gly-622–Val-715. The disordered stretch occupies residues Arg-659 to Pro-689. Residues Ser-666 to Arg-675 are compositionally biased toward basic residues.

This sequence belongs to the polyribonucleotide nucleotidyltransferase family. Mg(2+) serves as cofactor.

Its subcellular location is the cytoplasm. It catalyses the reaction RNA(n+1) + phosphate = RNA(n) + a ribonucleoside 5'-diphosphate. In terms of biological role, involved in mRNA degradation. Catalyzes the phosphorolysis of single-stranded polyribonucleotides processively in the 3'- to 5'-direction. The protein is Polyribonucleotide nucleotidyltransferase of Borrelia hermsii (strain HS1 / DAH).